We begin with the raw amino-acid sequence, 473 residues long: MMTKVLGMAPVLGPRPPQEQVGPLMVKVEEKEEKGKYLPSLEMFRQRFRQFGYHDTPGPREALSQLRVLCCEWLRPEIHTKEQILELLVLEQFLTILPQELQAWVQEHCPESAEEAVTLLEDLERELDEPGHQVSTPPNEQKPVWEKISSSGTAKESPSSMQPQPLETCHKYESWGPLYIQESGEEQEFAQDPRKVRDCRLSTQHEESADEQKGSEAEGLKGDIISVIIANKPEASLERQCVNLENEKGTKPPLQEAGSKKGRESVPTKPTPGERRYICAECGKAFSNSSNLTKHRRTHTGEKPYVCTKCGKAFSHSSNLTLHYRTHLVDRPYDCKCGKAFGQSSDLLKHQRMHTEEAPYQCKDCGKAFSGKGSLIRHYRIHTGEKPYQCNECGKSFSQHAGLSSHQRLHTGEKPYKCKECGKAFNHSSNFNKHHRIHTGEKPYWCHHCGKTFCSKSNLSKHQRVHTGEGEAP.

Residue lysine 27 forms a Glycyl lysine isopeptide (Lys-Gly) (interchain with G-Cter in SUMO2) linkage. Positions 45 to 127 (RQRFRQFGYH…TLLEDLEREL (83 aa)) constitute an SCAN box domain. Residues 127–167 (LDEPGHQVSTPPNEQKPVWEKISSSGTAKESPSSMQPQPLE) form a disordered region. The span at 148 to 165 (ISSSGTAKESPSSMQPQP) shows a compositional bias: polar residues. Residues lysine 221 and lysine 232 each participate in a glycyl lysine isopeptide (Lys-Gly) (interchain with G-Cter in SUMO2) cross-link. Residues 244–272 (LENEKGTKPPLQEAGSKKGRESVPTKPTP) are disordered. Basic and acidic residues predominate over residues 258 to 272 (GSKKGRESVPTKPTP). C2H2-type zinc fingers lie at residues 277–299 (YICA…RRTH), 305–327 (YVCT…YRTH), 333–354 (YDCK…QRMH), 360–382 (YQCK…YRIH), 388–410 (YQCN…QRLH), 416–438 (YKCK…HRIH), and 444–466 (YWCH…QRVH). Lysine 349 is covalently cross-linked (Glycyl lysine isopeptide (Lys-Gly) (interchain with G-Cter in SUMO2)).

Belongs to the krueppel C2H2-type zinc-finger protein family.

It localises to the nucleus. In terms of biological role, strong transcriptional activator. Plays an important role in spermatogenesis; essential for the progression of meiotic prophase I in spermatocytes. The protein is Zinc finger and SCAN domain-containing protein 21 (ZSCAN21) of Pan troglodytes (Chimpanzee).